A 423-amino-acid chain; its full sequence is Serine--tRNA ligase (423 aa).

L-serine is bound at residue 231-233 (TGE). 262–264 (RSE) provides a ligand contact to ATP. Glutamate 285 lines the L-serine pocket. Position 349–352 (349–352 (EISS)) interacts with ATP. L-serine is bound at residue serine 385.

Belongs to the class-II aminoacyl-tRNA synthetase family. Type-1 seryl-tRNA synthetase subfamily. As to quaternary structure, homodimer. The tRNA molecule binds across the dimer.

It localises to the cytoplasm. The catalysed reaction is tRNA(Ser) + L-serine + ATP = L-seryl-tRNA(Ser) + AMP + diphosphate + H(+). It catalyses the reaction tRNA(Sec) + L-serine + ATP = L-seryl-tRNA(Sec) + AMP + diphosphate + H(+). The protein operates within aminoacyl-tRNA biosynthesis; selenocysteinyl-tRNA(Sec) biosynthesis; L-seryl-tRNA(Sec) from L-serine and tRNA(Sec): step 1/1. In terms of biological role, catalyzes the attachment of serine to tRNA(Ser). Is also able to aminoacylate tRNA(Sec) with serine, to form the misacylated tRNA L-seryl-tRNA(Sec), which will be further converted into selenocysteinyl-tRNA(Sec). The sequence is that of Serine--tRNA ligase from Coxiella burnetii (strain RSA 331 / Henzerling II).